A 421-amino-acid chain; its full sequence is Adenylosuccinate synthetase (421 aa).

GTP contacts are provided by residues 11–17 and 39–41; these read GDEGKGK and GHT. Asp-12 serves as the catalytic Proton acceptor. Residues Asp-12 and Gly-39 each contribute to the Mg(2+) site. IMP is bound by residues 12 to 15, 37 to 40, Thr-129, Arg-143, Asn-219, Thr-234, and Arg-298; these read DEGK and NAGH. The active-site Proton donor is the His-40. Residue 294–300 participates in substrate binding; it reads VTTGRRR. GTP-binding positions include Arg-300, 326–328, and 409–411; these read KLD and GTG.

Belongs to the adenylosuccinate synthetase family. Homodimer. It depends on Mg(2+) as a cofactor.

It localises to the cytoplasm. It carries out the reaction IMP + L-aspartate + GTP = N(6)-(1,2-dicarboxyethyl)-AMP + GDP + phosphate + 2 H(+). It functions in the pathway purine metabolism; AMP biosynthesis via de novo pathway; AMP from IMP: step 1/2. Functionally, plays an important role in the de novo pathway and in the salvage pathway of purine nucleotide biosynthesis. Catalyzes the first committed step in the biosynthesis of AMP from IMP. The chain is Adenylosuccinate synthetase from Paracoccidioides brasiliensis (strain Pb03).